Here is a 588-residue protein sequence, read N- to C-terminus: Putative calcium-binding mitochondrial carrier F55A11.4 (588 aa).

A compositionally biased stretch (polar residues) spans 1–14; the sequence is MINKNEQTESTSGA. The interval 1–25 is disordered; that stretch reads MINKNEQTESTSGAAEQKEDDEEQY. EF-hand domains are found at residues 73–108, 109–139, 140–175, and 176–211; these read EKER…ETPH, IPAN…SYVL, ENEQ…IGVP, and LDDH…YPSS. 5 residues coordinate Ca(2+): Asp-86, Asp-88, Asp-90, Thr-92, and Asp-97. 4 residues coordinate Ca(2+): Asp-153, Asn-155, Asp-157, and Glu-164. Solcar repeat units follow at residues 246–332, 342–428, and 440–529; these read GIWW…LKRL, ISTF…LKRT, and PGVL…VRTG. A run of 6 helical transmembrane segments spans residues 252–269, 307–326, 352–365, 403–422, 446–463, and 504–523; these read LVAG…TAPF, GNGI…FMCY, SAAG…IYPM, GYLP…LAIY, LACG…SYPF, and GITP…YVVY.

It belongs to the mitochondrial carrier (TC 2.A.29) family. In terms of assembly, homodimer (via N-terminus).

It is found in the mitochondrion inner membrane. In terms of biological role, mitochondrial and calcium-binding carrier that catalyzes the calcium-dependent exchange of cytoplasmic glutamate with mitochondrial aspartate across the mitochondrial inner membrane. The protein is Putative calcium-binding mitochondrial carrier F55A11.4 of Caenorhabditis elegans.